We begin with the raw amino-acid sequence, 344 residues long: L-rhamnose-proton symporter (344 aa).

10 consecutive transmembrane segments (helical) span residues 4 to 24 (AITM…CFYA), 38 to 58 (WSVG…ALLL), 68 to 88 (FNLS…IGNI), 101 to 121 (MGIG…TPII), 137 to 157 (TLLG…AGQL), 175 to 195 (LLLA…MNAA), 214 to 234 (LPSY…FCFI), 259 to 279 (ILLS…YAWG), 290 to 310 (MSWM…GLVL), and 321 to 341 (VAVL…VGLG).

The protein belongs to the L-rhamnose transporter (TC 2.A.7.6) family.

It is found in the cell inner membrane. The catalysed reaction is L-rhamnopyranose(in) + H(+)(in) = L-rhamnopyranose(out) + H(+)(out). Uptake of L-rhamnose across the cytoplasmic membrane with the concomitant transport of protons into the cell (symport system). The protein is L-rhamnose-proton symporter of Salmonella gallinarum (strain 287/91 / NCTC 13346).